The primary structure comprises 59 residues: Large ribosomal subunit protein uL30 (59 aa).

This sequence belongs to the universal ribosomal protein uL30 family. Part of the 50S ribosomal subunit.

This Citrobacter koseri (strain ATCC BAA-895 / CDC 4225-83 / SGSC4696) protein is Large ribosomal subunit protein uL30.